Consider the following 430-residue polypeptide: Enolase (430 aa).

Q163 lines the (2R)-2-phosphoglycerate pocket. Residue E205 is the Proton donor of the active site. Mg(2+) contacts are provided by D242, E288, and D315. 4 residues coordinate (2R)-2-phosphoglycerate: K340, R369, S370, and K391. Residue K340 is the Proton acceptor of the active site.

Belongs to the enolase family. Mg(2+) serves as cofactor.

The protein localises to the cytoplasm. The protein resides in the secreted. It is found in the cell surface. The catalysed reaction is (2R)-2-phosphoglycerate = phosphoenolpyruvate + H2O. It functions in the pathway carbohydrate degradation; glycolysis; pyruvate from D-glyceraldehyde 3-phosphate: step 4/5. Catalyzes the reversible conversion of 2-phosphoglycerate (2-PG) into phosphoenolpyruvate (PEP). It is essential for the degradation of carbohydrates via glycolysis. This Acidobacterium capsulatum (strain ATCC 51196 / DSM 11244 / BCRC 80197 / JCM 7670 / NBRC 15755 / NCIMB 13165 / 161) protein is Enolase.